Here is a 526-residue protein sequence, read N- to C-terminus: Na(+)/H(+) antiporter NhaB (526 aa).

The next 11 helical transmembrane spans lie at phenylalanine 14–proline 34, cysteine 63–serine 83, methionine 99–phenylalanine 119, leucine 122–phenylalanine 142, phenylalanine 146–isoleucine 166, leucine 206–proline 226, phenylalanine 239–leucine 259, alanine 307–isoleucine 327, phenylalanine 357–phenylalanine 377, alanine 451–isoleucine 471, and valine 479–phenylalanine 499.

The protein belongs to the NhaB Na(+)/H(+) (TC 2.A.34) antiporter family.

Its subcellular location is the cell inner membrane. It carries out the reaction 2 Na(+)(in) + 3 H(+)(out) = 2 Na(+)(out) + 3 H(+)(in). In terms of biological role, na(+)/H(+) antiporter that extrudes sodium in exchange for external protons. This chain is Na(+)/H(+) antiporter NhaB, found in Pectobacterium carotovorum subsp. carotovorum (strain PC1).